The primary structure comprises 232 residues: Phosphoribosylformylglycinamidine synthase subunit PurQ (232 aa).

The Glutamine amidotransferase type-1 domain maps to lysine 2–phenylalanine 232. Cysteine 86 acts as the Nucleophile in catalysis. Residues histidine 203 and glutamate 205 contribute to the active site.

As to quaternary structure, part of the FGAM synthase complex composed of 1 PurL, 1 PurQ and 2 PurS subunits.

It localises to the cytoplasm. The catalysed reaction is N(2)-formyl-N(1)-(5-phospho-beta-D-ribosyl)glycinamide + L-glutamine + ATP + H2O = 2-formamido-N(1)-(5-O-phospho-beta-D-ribosyl)acetamidine + L-glutamate + ADP + phosphate + H(+). The enzyme catalyses L-glutamine + H2O = L-glutamate + NH4(+). The protein operates within purine metabolism; IMP biosynthesis via de novo pathway; 5-amino-1-(5-phospho-D-ribosyl)imidazole from N(2)-formyl-N(1)-(5-phospho-D-ribosyl)glycinamide: step 1/2. Functionally, part of the phosphoribosylformylglycinamidine synthase complex involved in the purines biosynthetic pathway. Catalyzes the ATP-dependent conversion of formylglycinamide ribonucleotide (FGAR) and glutamine to yield formylglycinamidine ribonucleotide (FGAM) and glutamate. The FGAM synthase complex is composed of three subunits. PurQ produces an ammonia molecule by converting glutamine to glutamate. PurL transfers the ammonia molecule to FGAR to form FGAM in an ATP-dependent manner. PurS interacts with PurQ and PurL and is thought to assist in the transfer of the ammonia molecule from PurQ to PurL. The sequence is that of Phosphoribosylformylglycinamidine synthase subunit PurQ from Methanosarcina acetivorans (strain ATCC 35395 / DSM 2834 / JCM 12185 / C2A).